The following is a 132-amino-acid chain: Small ribosomal subunit protein uS8 (132 aa).

Belongs to the universal ribosomal protein uS8 family. As to quaternary structure, part of the 30S ribosomal subunit. Contacts proteins S5 and S12.

One of the primary rRNA binding proteins, it binds directly to 16S rRNA central domain where it helps coordinate assembly of the platform of the 30S subunit. The chain is Small ribosomal subunit protein uS8 from Ehrlichia chaffeensis (strain ATCC CRL-10679 / Arkansas).